Here is a 376-residue protein sequence, read N- to C-terminus: TelA-like protein SE_1089 (376 aa).

The protein belongs to the TelA family.

This Staphylococcus epidermidis (strain ATCC 12228 / FDA PCI 1200) protein is TelA-like protein SE_1089.